The sequence spans 361 residues: Molybdenum import ATP-binding protein ModC 1 (361 aa).

In terms of domain architecture, ABC transporter spans 1–237 (MPADGIRARF…LDLPTAFHED (237 aa)). An ATP-binding site is contributed by 35–42 (GHSGSGKT). In terms of domain architecture, Mop spans 296 to 361 (DSSITNVLPA…AQIKAVALLG (66 aa)).

The protein belongs to the ABC transporter superfamily. Molybdate importer (TC 3.A.1.8) family. As to quaternary structure, the complex is composed of two ATP-binding proteins (ModC), two transmembrane proteins (ModB) and a solute-binding protein (ModA).

The protein resides in the cell inner membrane. The catalysed reaction is molybdate(out) + ATP + H2O = molybdate(in) + ADP + phosphate + H(+). Part of the ABC transporter complex ModABC involved in molybdenum import. Responsible for energy coupling to the transport system. In Azotobacter vinelandii, this protein is Molybdenum import ATP-binding protein ModC 1.